The sequence spans 102 residues: MALNQQDVARIARLARIELTPEQQSRAQDELNGILHLIERLQAVDTQGVEPLAHPLSAHEDIPLRLRQDAVTETASAERRAELLANAPEQSAGLFLVPKVIE.

It belongs to the GatC family. As to quaternary structure, heterotrimer of A, B and C subunits.

It carries out the reaction L-glutamyl-tRNA(Gln) + L-glutamine + ATP + H2O = L-glutaminyl-tRNA(Gln) + L-glutamate + ADP + phosphate + H(+). The catalysed reaction is L-aspartyl-tRNA(Asn) + L-glutamine + ATP + H2O = L-asparaginyl-tRNA(Asn) + L-glutamate + ADP + phosphate + 2 H(+). Functionally, allows the formation of correctly charged Asn-tRNA(Asn) or Gln-tRNA(Gln) through the transamidation of misacylated Asp-tRNA(Asn) or Glu-tRNA(Gln) in organisms which lack either or both of asparaginyl-tRNA or glutaminyl-tRNA synthetases. The reaction takes place in the presence of glutamine and ATP through an activated phospho-Asp-tRNA(Asn) or phospho-Glu-tRNA(Gln). This chain is Aspartyl/glutamyl-tRNA(Asn/Gln) amidotransferase subunit C, found in Bordetella avium (strain 197N).